Consider the following 34-residue polypeptide: Turripeptide Pal9a (34 aa).

3 disulfide bridges follow: Cys3-Cys17, Cys8-Cys19, and Cys13-Cys30. Gln34 bears the Glutamine amide mark.

Expressed by the venom duct.

It is found in the secreted. This chain is Turripeptide Pal9a, found in Polystira albida (White giant-turris).